A 217-amino-acid polypeptide reads, in one-letter code: Pyridoxine/pyridoxamine 5'-phosphate oxidase (217 aa).

Substrate-binding positions include 13–16 and Lys71; that span reads RREY. Residues 66-71, 81-82, Arg87, Lys88, and Gln110 contribute to the FMN site; these read RIVLLK and YT. Substrate is bound by residues Tyr128, Arg132, and Ser136. Residues 145–146 and Trp190 contribute to the FMN site; that span reads QS. Substrate is bound at residue 196–198; sequence RLH. Arg200 lines the FMN pocket.

This sequence belongs to the pyridoxamine 5'-phosphate oxidase family. In terms of assembly, homodimer. FMN serves as cofactor.

It carries out the reaction pyridoxamine 5'-phosphate + O2 + H2O = pyridoxal 5'-phosphate + H2O2 + NH4(+). It catalyses the reaction pyridoxine 5'-phosphate + O2 = pyridoxal 5'-phosphate + H2O2. The protein operates within cofactor metabolism; pyridoxal 5'-phosphate salvage; pyridoxal 5'-phosphate from pyridoxamine 5'-phosphate: step 1/1. It functions in the pathway cofactor metabolism; pyridoxal 5'-phosphate salvage; pyridoxal 5'-phosphate from pyridoxine 5'-phosphate: step 1/1. Catalyzes the oxidation of either pyridoxine 5'-phosphate (PNP) or pyridoxamine 5'-phosphate (PMP) into pyridoxal 5'-phosphate (PLP). This Photorhabdus laumondii subsp. laumondii (strain DSM 15139 / CIP 105565 / TT01) (Photorhabdus luminescens subsp. laumondii) protein is Pyridoxine/pyridoxamine 5'-phosphate oxidase.